Consider the following 96-residue polypeptide: Small ribosomal subunit protein bS6 (96 aa).

Belongs to the bacterial ribosomal protein bS6 family.

In terms of biological role, binds together with bS18 to 16S ribosomal RNA. This chain is Small ribosomal subunit protein bS6, found in Streptococcus equi subsp. equi (strain 4047).